The sequence spans 507 residues: Phosphoenolpyruvate carboxylase (507 aa).

A disordered region spans residues 1 to 25 (MHKIDRKIPNIMGTQHPDNAGVPFF).

The protein belongs to the PEPCase type 2 family. Homotetramer. Requires Mg(2+) as cofactor.

The catalysed reaction is oxaloacetate + phosphate = phosphoenolpyruvate + hydrogencarbonate. Its function is as follows. Catalyzes the irreversible beta-carboxylation of phosphoenolpyruvate (PEP) to form oxaloacetate (OAA), a four-carbon dicarboxylic acid source for the tricarboxylic acid cycle. The polypeptide is Phosphoenolpyruvate carboxylase (Oenococcus oeni (strain ATCC BAA-331 / PSU-1)).